A 78-amino-acid chain; its full sequence is Omega-conotoxin-like ArMKLT1-011 (78 aa).

A signal peptide spans 1 to 22 (MKLTCMMIVAVLFLTAWTSVTA). Residues 23 to 48 (VNTRGELENLFLRASHEMNSEASKLD) constitute a propeptide that is removed on maturation. Intrachain disulfides connect cysteine 52-cysteine 69, cysteine 59-cysteine 73, and cysteine 68-cysteine 77.

This sequence belongs to the conotoxin O1 superfamily. In terms of tissue distribution, expressed by the venom duct.

The protein resides in the secreted. Functionally, omega-conotoxins act at presynaptic membranes, they bind and block voltage-gated calcium channels (Cav). The polypeptide is Omega-conotoxin-like ArMKLT1-011 (Conus arenatus (Sand-dusted cone)).